The chain runs to 393 residues: NAD(P)H-quinone oxidoreductase subunit H, chloroplastic (393 aa).

The protein belongs to the complex I 49 kDa subunit family. NDH is composed of at least 16 different subunits, 5 of which are encoded in the nucleus.

The protein localises to the plastid. It localises to the chloroplast thylakoid membrane. It carries out the reaction a plastoquinone + NADH + (n+1) H(+)(in) = a plastoquinol + NAD(+) + n H(+)(out). It catalyses the reaction a plastoquinone + NADPH + (n+1) H(+)(in) = a plastoquinol + NADP(+) + n H(+)(out). In terms of biological role, NDH shuttles electrons from NAD(P)H:plastoquinone, via FMN and iron-sulfur (Fe-S) centers, to quinones in the photosynthetic chain and possibly in a chloroplast respiratory chain. The immediate electron acceptor for the enzyme in this species is believed to be plastoquinone. Couples the redox reaction to proton translocation, and thus conserves the redox energy in a proton gradient. The protein is NAD(P)H-quinone oxidoreductase subunit H, chloroplastic of Sorghum bicolor (Sorghum).